A 460-amino-acid chain; its full sequence is MLKILIPTLFLLPTTWLTSSKWLWPTALTQSMLIALGSITWLNNTTDTGWTALNSYIGTDPLSTPLLVLSCWLLPLMLLASQNHLSSEPMNRQRMYITLLATLQLFLILAFGATEMIMFYVMFEATLIPTLLVITRWGNHTERLNAGTYFLFYTLAGSLPLLVALLMLQNNTGTLSLLIIPYAKPLLLMPFGSKIWWAACMIAFLVKMPLYGMHLWLPKAHVEAPVAGSMVLAAVLLKLGGYGMMRLMIVLDPLSKEMVYPFIVLALWGVIITGSICLRQTDLKSLIAYSSVSHMGLVAGGILIQTPWGFTGALILMIAHGLASSALFCLANTNYERTHSRTMLLARGLQIALPLMTTWWFIASLANLALPPLPNLMGELMILTSLFNWSAWTLILTGIGTLITAAYSLYMFLMSQRGPLPQHMLALPPSYTREHLLMALHLIPLLLIILKPALLWGWFA.

Helical transmembrane passes span 22-42 (WLWP…ITWL), 61-81 (PLST…LLAS), 94-113 (RMYI…AFGA), 117-139 (IMFY…RWGN), 148-168 (TYFL…LLML), 195-217 (IWWA…HLWL), 225-245 (PVAG…YGMM), 258-278 (MVYP…SICL), 285-304 (SLIA…GILI), 308-330 (WGFT…LFCL), 351-371 (IALP…LALP), 394-414 (LILT…MFLM), and 436-456 (LLMA…ALLW).

The protein belongs to the complex I subunit 4 family.

It localises to the mitochondrion membrane. It catalyses the reaction a ubiquinone + NADH + 5 H(+)(in) = a ubiquinol + NAD(+) + 4 H(+)(out). Its function is as follows. Core subunit of the mitochondrial membrane respiratory chain NADH dehydrogenase (Complex I) that is believed to belong to the minimal assembly required for catalysis. Complex I functions in the transfer of electrons from NADH to the respiratory chain. The immediate electron acceptor for the enzyme is believed to be ubiquinone. The chain is NADH-ubiquinone oxidoreductase chain 4 (MT-ND4) from Gadus morhua (Atlantic cod).